The following is a 450-amino-acid chain: Putative gustatory receptor 28a (450 aa).

The Cytoplasmic portion of the chain corresponds to 1–47 (MAFKLWERFSQADNVFQALRPLTFISLLGLAPFRLNLNPRKEVQTSK). The helical transmembrane segment at 48–68 (FSFFAGIVHFLFFVLCFGISV) threads the bilayer. Topologically, residues 69-87 (KEGDSIIGYFFQTNITRFS) are extracellular. Residue Asn82 is glycosylated (N-linked (GlcNAc...) asparagine). Residues 88-108 (DGTLRLTGILAMSTIFGFAMF) traverse the membrane as a helical segment. At 109–138 (KRQRLVSIIQNNIVVDEIFVRLGMKLDYRR) the chain is on the cytoplasmic side. A helical transmembrane segment spans residues 139 to 159 (ILLSSFLISLGMLLFNVIYLC). The Extracellular portion of the chain corresponds to 160–171 (VSYSLLVSATIS). Residues 172 to 192 (PSFVTFTTFALPHINISLMVF) traverse the membrane as a helical segment. The Cytoplasmic portion of the chain corresponds to 193–292 (KFLCTTDLAR…CQTIEEYFTY (100 aa)). The helical transmembrane segment at 293 to 313 (PLLGIIAISFLFILFDDFYIL) threads the bilayer. Over 314–329 (EAILNPKRLDVFEADE) the chain is Extracellular. Residues 330–350 (FFAFFLMQLIWYIVIIVLIVE) form a helical membrane-spanning segment. Residues 351–407 (GSSRTILHSSYTAAIVHKILNITDDPELRDRLFRLSLQLSHRKVLFTAAGLFRLDRT) are Cytoplasmic-facing. A helical membrane pass occupies residues 408-424 (LIFTITGAATCYLIILI). Topologically, residues 425 to 450 (QFRFTHHMDDTSSNSTNNLHSIHLGD) are extracellular. N-linked (GlcNAc...) asparagine glycosylation occurs at Asn438.

It belongs to the insect chemoreceptor superfamily. Gustatory receptor (GR) family. Gr2a subfamily. In addition to expression in a large number of taste neurons, Gr28a is also expressed in a few nonchemosensory neurons, including the campaniform sensilla of the wing, leg stretch receptors, and multiple dendritic (MD) neurons in the abdomen. In larvea, is expressed in neurons of the terminal external chemosensory organ, the dorsal external chemosensory organ, as well as in the ventral and posterior pharyngeal sense organ.

The protein localises to the cell membrane. Its function is as follows. Probable gustatory receptor which mediates acceptance or avoidance behavior, depending on its substrates. Atypical expression also suggests nongustatory roles in the nervous system and tissues involved in proprioception, hygroreception, and other sensory modalities. It is also possible that it has chemosensory roles in the detection of internal ligands. This Drosophila melanogaster (Fruit fly) protein is Putative gustatory receptor 28a (Gr28a).